A 609-amino-acid chain; its full sequence is Glutamine--fructose-6-phosphate aminotransferase [isomerizing] (609 aa).

The active-site Nucleophile; for GATase activity is Cys-2. In terms of domain architecture, Glutamine amidotransferase type-2 spans 2 to 218 (CGIVGAVAQR…EGDIAEVTRR (217 aa)). SIS domains are found at residues 286 to 426 (AAKL…LKGV) and 458 to 599 (LAED…VDQP). Lys-604 serves as the catalytic For Fru-6P isomerization activity.

As to quaternary structure, homodimer.

The protein resides in the cytoplasm. The catalysed reaction is D-fructose 6-phosphate + L-glutamine = D-glucosamine 6-phosphate + L-glutamate. In terms of biological role, catalyzes the first step in hexosamine metabolism, converting fructose-6P into glucosamine-6P using glutamine as a nitrogen source. This chain is Glutamine--fructose-6-phosphate aminotransferase [isomerizing], found in Photorhabdus laumondii subsp. laumondii (strain DSM 15139 / CIP 105565 / TT01) (Photorhabdus luminescens subsp. laumondii).